Consider the following 164-residue polypeptide: S-ribosylhomocysteine lyase (164 aa).

His61, His65, and Cys131 together coordinate Fe cation.

This sequence belongs to the LuxS family. In terms of assembly, homodimer. It depends on Fe cation as a cofactor.

The enzyme catalyses S-(5-deoxy-D-ribos-5-yl)-L-homocysteine = (S)-4,5-dihydroxypentane-2,3-dione + L-homocysteine. Its function is as follows. Involved in the synthesis of autoinducer 2 (AI-2) which is secreted by bacteria and is used to communicate both the cell density and the metabolic potential of the environment. The regulation of gene expression in response to changes in cell density is called quorum sensing. Catalyzes the transformation of S-ribosylhomocysteine (RHC) to homocysteine (HC) and 4,5-dihydroxy-2,3-pentadione (DPD). The chain is S-ribosylhomocysteine lyase from Bifidobacterium longum (strain DJO10A).